The sequence spans 394 residues: G2/mitotic-specific cyclin-B2 (394 aa).

The protein belongs to the cyclin family. Cyclin AB subfamily. As to quaternary structure, interacts with the CDK1 protein kinase to form a serine/threonine kinase holoenzyme complex also known as maturation promoting factor (MPF). The cyclin subunit imparts substrate specificity to the complex.

Functionally, essential for the control of the cell cycle at the G2/M (mitosis) transition. This chain is G2/mitotic-specific cyclin-B2 (ccnb2), found in Anguilla japonica (Japanese eel).